The primary structure comprises 248 residues: Probable N-acetylglucosaminyl-phosphatidylinositol de-N-acetylase (248 aa).

Residues 1–7 (MIWFWST) are Lumenal-facing. The chain crosses the membrane as a helical span at residues 8–24 (LLVTAIAVLSTANESSS). Over 25 to 248 (GQEKLAVESI…MSNNVLKRAT (224 aa)) the chain is Cytoplasmic.

It belongs to the PIGL family.

Its subcellular location is the endoplasmic reticulum membrane. The catalysed reaction is a 6-(N-acetyl-alpha-D-glucosaminyl)-1-(1,2-diacyl-sn-glycero-3-phospho)-1D-myo-inositol + H2O = a 6-(alpha-D-glucosaminyl)-1-(1,2-diacyl-sn-glycero-3-phospho)-1D-myo-inositol + acetate. It functions in the pathway glycolipid biosynthesis; glycosylphosphatidylinositol-anchor biosynthesis. Its function is as follows. Involved in the second step of GPI biosynthesis. De-N-acetylation of N-acetylglucosaminyl-phosphatidylinositol. This Schizosaccharomyces pombe (strain 972 / ATCC 24843) (Fission yeast) protein is Probable N-acetylglucosaminyl-phosphatidylinositol de-N-acetylase (gpi12).